The primary structure comprises 604 residues: Glucose oxidase 2 (604 aa).

The first 16 residues, 1–16 (MKLLGLLSGLVVVATA), serve as a signal peptide directing secretion. FAD-binding residues include leucine 49 and threonine 50. N-linked (GlcNAc...) asparagine glycosylation is present at asparagine 63. Glutamate 70 is a binding site for FAD. Residue asparagine 109 is glycosylated (N-linked (GlcNAc...) asparagine). The FAD site is built by serine 123, asparagine 127, glycine 128, and serine 130. Cysteine 184 and cysteine 226 are disulfide-bonded. N-linked (GlcNAc...) asparagine glycosylation occurs at asparagine 214. Valine 270 is a binding site for FAD. 3 N-linked (GlcNAc...) asparagine glycosylation sites follow: asparagine 375, asparagine 408, and asparagine 517. Residue histidine 536 is the Proton acceptor of the active site. O2 is bound by residues arginine 557 and valine 558. FAD is bound by residues glycine 569 and methionine 581. Asparagine 600 is a glycosylation site (N-linked (GlcNAc...) asparagine).

The protein belongs to the GMC oxidoreductase family. In terms of assembly, homodimer. The cofactor is FAD.

The protein localises to the secreted. The protein resides in the cell wall. It localises to the cytoplasm. It is found in the extracellular space. Its subcellular location is the extracellular matrix. It catalyses the reaction beta-D-glucose + O2 = D-glucono-1,5-lactone + H2O2. In terms of biological role, glucose oxidase catalyzes the oxidation of beta-D-glucose to D-glucono-delta-lactone and hydrogen peroxide in the presence of molecular oxygen. D-glucono-delta-lactone is sequentially hydrolyzed by lactonase to D-gluconic acid, and the resulting hydrogen peroxide is hydrolyzed by catalase to oxygen and water. Acts as a key factor contributing to fungal disease of apple. The production of gluconic acid leads to host tissue acidification that enhances the expression of pectolytic enzymes and the establishment of conditions for necrotrophic development of P.expansum. This chain is Glucose oxidase 2, found in Penicillium expansum (Blue mold rot fungus).